The chain runs to 485 residues: UDP-N-acetylmuramoyl-L-alanyl-D-glutamate--2,6-diaminopimelate ligase (485 aa).

Position 30 (serine 30) interacts with UDP-N-acetyl-alpha-D-muramoyl-L-alanyl-D-glutamate. Position 113–119 (113–119) interacts with ATP; it reads GTNGKTT. UDP-N-acetyl-alpha-D-muramoyl-L-alanyl-D-glutamate-binding positions include 155-156, serine 182, and arginine 190; that span reads TT. Residue lysine 222 is modified to N6-carboxylysine. Residues arginine 381, 405–408, glycine 455, and glutamate 459 each bind meso-2,6-diaminopimelate; that span reads DNPR. The short motif at 405-408 is the Meso-diaminopimelate recognition motif element; it reads DNPR.

The protein belongs to the MurCDEF family. MurE subfamily. Mg(2+) serves as cofactor. In terms of processing, carboxylation is probably crucial for Mg(2+) binding and, consequently, for the gamma-phosphate positioning of ATP.

Its subcellular location is the cytoplasm. It catalyses the reaction UDP-N-acetyl-alpha-D-muramoyl-L-alanyl-D-glutamate + meso-2,6-diaminopimelate + ATP = UDP-N-acetyl-alpha-D-muramoyl-L-alanyl-gamma-D-glutamyl-meso-2,6-diaminopimelate + ADP + phosphate + H(+). Its pathway is cell wall biogenesis; peptidoglycan biosynthesis. Catalyzes the addition of meso-diaminopimelic acid to the nucleotide precursor UDP-N-acetylmuramoyl-L-alanyl-D-glutamate (UMAG) in the biosynthesis of bacterial cell-wall peptidoglycan. The polypeptide is UDP-N-acetylmuramoyl-L-alanyl-D-glutamate--2,6-diaminopimelate ligase (Clostridium tetani (strain Massachusetts / E88)).